Here is a 237-residue protein sequence, read N- to C-terminus: Mannose-specific lectin alpha chain (237 aa).

The Mn(2+) site is built by glutamate 8 and aspartate 10. Aspartate 10, tyrosine 12, asparagine 14, and aspartate 19 together coordinate Ca(2+). Tyrosine 12 is a binding site for a carbohydrate. The Mn(2+) site is built by aspartate 19, histidine 24, and serine 34. Residue 99 to 100 coordinates a carbohydrate; it reads LY. Aspartate 208 is a Ca(2+) binding site. Arginine 228 serves as a coordination point for a carbohydrate.

This sequence belongs to the leguminous lectin family. In terms of assembly, homotetramer. The beta and gamma chains are produced by partial proteolytic processing of the lectin alpha chain by an asparaginyl endopeptidase.

In terms of biological role, D-mannose/D-glucose-binding lectin. Also binds derivatives of glucose and mannose such as more complex glycans. The protein is Mannose-specific lectin alpha chain of Cymbosema roseum (Dioclea purpurea).